A 150-amino-acid chain; its full sequence is Transcriptional repressor NrdR (150 aa).

The segment at 3-34 (CPFCNASDTKVVDTRASEDDKIVRRRRECISC) is a zinc-finger region. The region spanning 49–139 (LTVVKKDKNR…VYREFTDVKS (91 aa)) is the ATP-cone domain.

This sequence belongs to the NrdR family. The cofactor is Zn(2+).

Its function is as follows. Negatively regulates transcription of bacterial ribonucleotide reductase nrd genes and operons by binding to NrdR-boxes. The polypeptide is Transcriptional repressor NrdR (Finegoldia magna (strain ATCC 29328 / DSM 20472 / WAL 2508) (Peptostreptococcus magnus)).